The sequence spans 662 residues: Probable lysophospholipase 3 (662 aa).

Positions 1–19 (MLFNCFGILALLQILPALA) are cleaved as a signal peptide. Residues N74, N127, N162, N196, N266, N274, N303, N376, N406, N411, N483, N518, N523, N547, N556, N574, N596, and N613 are each glycosylated (N-linked (GlcNAc...) asparagine). The PLA2c domain maps to 76-617 (TCPSDYMLRP…EQYCWNGTTV (542 aa)).

The protein belongs to the lysophospholipase family.

The protein resides in the secreted. It carries out the reaction a 1-acyl-sn-glycero-3-phosphocholine + H2O = sn-glycerol 3-phosphocholine + a fatty acid + H(+). Its function is as follows. Catalyzes the release of fatty acids from lysophospholipids. This Schizosaccharomyces pombe (strain 972 / ATCC 24843) (Fission yeast) protein is Probable lysophospholipase 3 (plb3).